Here is a 671-residue protein sequence, read N- to C-terminus: DNA ligase (671 aa).

Residues D31–D35, S80–L81, and E110 each bind NAD(+). Catalysis depends on K112, which acts as the N6-AMP-lysine intermediate. NAD(+)-binding residues include R133, E167, K283, and K307. Zn(2+)-binding residues include C401, C404, C419, and C424. The BRCT domain occupies E587–E671.

It belongs to the NAD-dependent DNA ligase family. LigA subfamily. The cofactor is Mg(2+). Mn(2+) serves as cofactor.

It catalyses the reaction NAD(+) + (deoxyribonucleotide)n-3'-hydroxyl + 5'-phospho-(deoxyribonucleotide)m = (deoxyribonucleotide)n+m + AMP + beta-nicotinamide D-nucleotide.. DNA ligase that catalyzes the formation of phosphodiester linkages between 5'-phosphoryl and 3'-hydroxyl groups in double-stranded DNA using NAD as a coenzyme and as the energy source for the reaction. It is essential for DNA replication and repair of damaged DNA. The protein is DNA ligase of Listeria innocua serovar 6a (strain ATCC BAA-680 / CLIP 11262).